The primary structure comprises 200 residues: uncharacterized protein (200 aa).

This is an uncharacterized protein from Ostreid herpesvirus 1 (isolate France) (OsHV-1).